Here is a 315-residue protein sequence, read N- to C-terminus: uncharacterized protein (315 aa).

The next 3 helical transmembrane spans lie at 19 to 39 (IGAG…GNVF), 56 to 76 (TVLV…LHSF), and 81 to 101 (PLKK…ISLI). Over residues 154-171 (EDSASSGRTSSSVNQPIQ) the composition is skewed to polar residues. The segment at 154–214 (EDSASSGRTS…EREARAQEHD (61 aa)) is disordered. Residues 203 to 214 (GGEREARAQEHD) show a composition bias toward basic and acidic residues.

Belongs to the ATPase C chain family.

It localises to the mitochondrion membrane. This is an uncharacterized protein from Arabidopsis thaliana (Mouse-ear cress).